Here is a 165-residue protein sequence, read N- to C-terminus: Peptide methionine sulfoxide reductase MsrA (165 aa).

Residue Cys-11 is part of the active site.

This sequence belongs to the MsrA Met sulfoxide reductase family.

The enzyme catalyses L-methionyl-[protein] + [thioredoxin]-disulfide + H2O = L-methionyl-(S)-S-oxide-[protein] + [thioredoxin]-dithiol. It catalyses the reaction [thioredoxin]-disulfide + L-methionine + H2O = L-methionine (S)-S-oxide + [thioredoxin]-dithiol. Functionally, has an important function as a repair enzyme for proteins that have been inactivated by oxidation. Catalyzes the reversible oxidation-reduction of methionine sulfoxide in proteins to methionine. In Ureaplasma urealyticum serovar 10 (strain ATCC 33699 / Western), this protein is Peptide methionine sulfoxide reductase MsrA.